The following is a 477-amino-acid chain: Tryptophan biosynthesis protein TrpCF (477 aa).

The indole-3-glycerol phosphate synthase stretch occupies residues 13–275; the sequence is SATVLQKIVL…NAVRSVIFGE (263 aa). Residues 276-477 are N-(5'-phosphoribosyl)anthranilate isomerase; sequence NKVCGLTRAQ…KVRLVFNNIY (202 aa).

In the N-terminal section; belongs to the TrpC family. It in the C-terminal section; belongs to the TrpF family. Monomer.

It carries out the reaction N-(5-phospho-beta-D-ribosyl)anthranilate = 1-(2-carboxyphenylamino)-1-deoxy-D-ribulose 5-phosphate. The enzyme catalyses 1-(2-carboxyphenylamino)-1-deoxy-D-ribulose 5-phosphate + H(+) = (1S,2R)-1-C-(indol-3-yl)glycerol 3-phosphate + CO2 + H2O. It functions in the pathway amino-acid biosynthesis; L-tryptophan biosynthesis; L-tryptophan from chorismate: step 3/5. Its pathway is amino-acid biosynthesis; L-tryptophan biosynthesis; L-tryptophan from chorismate: step 4/5. In terms of biological role, bifunctional enzyme that catalyzes two sequential steps of tryptophan biosynthetic pathway. The first reaction is catalyzed by the isomerase, coded by the TrpF domain; the second reaction is catalyzed by the synthase, coded by the TrpC domain. This Haemophilus influenzae (strain ATCC 51907 / DSM 11121 / KW20 / Rd) protein is Tryptophan biosynthesis protein TrpCF (trpC).